Consider the following 106-residue polypeptide: Large ribosomal subunit protein eL42 (106 aa).

This sequence belongs to the eukaryotic ribosomal protein eL42 family.

This Cyberlindnera jadinii (Torula yeast) protein is Large ribosomal subunit protein eL42 (RPL44).